Reading from the N-terminus, the 105-residue chain is Integration host factor subunit alpha (105 aa).

It belongs to the bacterial histone-like protein family. Heterodimer of an alpha and a beta chain.

Functionally, this protein is one of the two subunits of integration host factor, a specific DNA-binding protein that functions in genetic recombination as well as in transcriptional and translational control. This is Integration host factor subunit alpha from Azorhizobium caulinodans (strain ATCC 43989 / DSM 5975 / JCM 20966 / LMG 6465 / NBRC 14845 / NCIMB 13405 / ORS 571).